We begin with the raw amino-acid sequence, 256 residues long: GTP cyclohydrolase FolE2 (256 aa).

Belongs to the GTP cyclohydrolase IV family.

It catalyses the reaction GTP + H2O = 7,8-dihydroneopterin 3'-triphosphate + formate + H(+). Its pathway is cofactor biosynthesis; 7,8-dihydroneopterin triphosphate biosynthesis; 7,8-dihydroneopterin triphosphate from GTP: step 1/1. In terms of biological role, converts GTP to 7,8-dihydroneopterin triphosphate. This chain is GTP cyclohydrolase FolE2, found in Maridesulfovibrio salexigens (strain ATCC 14822 / DSM 2638 / NCIMB 8403 / VKM B-1763) (Desulfovibrio salexigens).